A 773-amino-acid polypeptide reads, in one-letter code: MASRNRALFSVSTLFLCFIVCISEQSNNQSSPVFACDVTGNPSLAGLRFCNAGLSIKARVTDLVGRLTLEEKIGFLTSKAIGVSRLGIPSYKWWSEALHGVSNVGGGSRFTGQVPGATSFPQVILTAASFNVSLFQAIGKVVSTEARAMYNVGSAGLTFWSPNVNIFRDPRWGRGQETPGEDPTLSSKYAVAYVKGLQETDGGDPNRLKVAACCKHYTAYDIDNWRNVNRLTFNAVVNQQDLADTFQPPFKSCVVDGHVASVMCSYNQVNGKPTCADPDLLSGVIRGQWQLNGYIVSDCDSVDVLFRKQHYAKTPEEAVAKSLLAGLDLNCDHFNGQHAMGAVKAGLVNETAIDKAISNNFATLMRLGFFDGDPKKQLYGGLGPKDVCTADNQELARDGARQGIVLLKNSAGSLPLSPSAIKTLAVIGPNANATETMIGNYHGVPCKYTTPLQGLAETVSSTYQLGCNVACVDADIGSAVDLAASADAVVLVVGADQSIEREGHDRVDLYLPGKQQELVTRVAMAARGPVVLVIMSGGGFDITFAKNDKKITSIMWVGYPGEAGGLAIADVIFGRHNPSGNLPMTWYPQSYVEKVPMSNMNMRPDKSKGYPGRSYRFYTGETVYAFADALTYTKFDHQLIKAPRLVSLSLDENHPCRSSECQSLDAIGPHCENAVEGGSDFEVHLNVKNTGDRAGSHTVFLFTTSPQVHGSPIKQLLGFEKIRLGKSEEAVVRFNVNVCKDLSVVDETGKRKIALGHHLLHVGSLKHSLNISV.

The N-terminal stretch at 1-23 is a signal peptide; sequence MASRNRALFSVSTLFLCFIVCIS. The N-linked (GlcNAc...) asparagine glycan is linked to Asn131. The active site involves Asp298. 3 N-linked (GlcNAc...) asparagine glycosylation sites follow: Asn349, Asn432, and Asn770.

It belongs to the glycosyl hydrolase 3 family. Expressed in flowers and siliques, in the early stage of seed formation and not at seed maturation. Detected exclusively in the endosperm of very young seeds when the embryo is at the globular stage.

It localises to the secreted. It is found in the extracellular space. Its subcellular location is the extracellular matrix. It carries out the reaction Hydrolysis of terminal non-reducing alpha-L-arabinofuranoside residues in alpha-L-arabinosides.. In terms of biological role, involved in the hydrolysis of arabinan. Can hydrolyze (1,3)-alpha-, (1,2)-alpha-linked side group residues and non-reducing terminal L-arabinofuranose residues of debranched (1,5)-alpha-L-arabinan backbone. Also acts as a beta-D-xylosidase, releasing D-xylose from arabinoxylan and xylan. This is Beta-D-xylosidase 3 (BXL3) from Arabidopsis thaliana (Mouse-ear cress).